The chain runs to 169 residues: Crossover junction endodeoxyribonuclease RuvC (169 aa).

Residues Asp-15, Glu-75, and Asp-147 contribute to the active site. Mg(2+) is bound by residues Asp-15, Glu-75, and Asp-147.

The protein belongs to the RuvC family. In terms of assembly, homodimer which binds Holliday junction (HJ) DNA. The HJ becomes 2-fold symmetrical on binding to RuvC with unstacked arms; it has a different conformation from HJ DNA in complex with RuvA. In the full resolvosome a probable DNA-RuvA(4)-RuvB(12)-RuvC(2) complex forms which resolves the HJ. The cofactor is Mg(2+).

It is found in the cytoplasm. The catalysed reaction is Endonucleolytic cleavage at a junction such as a reciprocal single-stranded crossover between two homologous DNA duplexes (Holliday junction).. Functionally, the RuvA-RuvB-RuvC complex processes Holliday junction (HJ) DNA during genetic recombination and DNA repair. Endonuclease that resolves HJ intermediates. Cleaves cruciform DNA by making single-stranded nicks across the HJ at symmetrical positions within the homologous arms, yielding a 5'-phosphate and a 3'-hydroxyl group; requires a central core of homology in the junction. The consensus cleavage sequence is 5'-(A/T)TT(C/G)-3'. Cleavage occurs on the 3'-side of the TT dinucleotide at the point of strand exchange. HJ branch migration catalyzed by RuvA-RuvB allows RuvC to scan DNA until it finds its consensus sequence, where it cleaves and resolves the cruciform DNA. This Caulobacter sp. (strain K31) protein is Crossover junction endodeoxyribonuclease RuvC.